The sequence spans 308 residues: MNLEAFILGCGGMMPLPYRHLTSVLLRREGDLFLFDCGEGTQVALRRLNLRWKRINAIFISHTHADHITGLPGLLMLSSQVDREEPLYIIGPPKVAEYVETSRKVLDMYINYEIIVKEIREPGVVYSTEEFQVRSFWLDHTKPCMGYTFEEFERPGEFNPEAARALNVPCGPLWSKLQGGNEVVSADGKTIRPQDVMGPKRKGRKFSFVTDTKYLPSIAQEVKYSDFFVCEGMFEKGMEKDAAEKKHMTCTQAAQIAKDAEVKKMALIHYSPRYTDNELKVLLDHAREVFPETILSKDRMNIQLEYED.

His62, His64, Asp66, His67, His140, Asp211, and His269 together coordinate Zn(2+). The active-site Proton acceptor is the Asp66.

It belongs to the RNase Z family. Homodimer. It depends on Zn(2+) as a cofactor.

It carries out the reaction Endonucleolytic cleavage of RNA, removing extra 3' nucleotides from tRNA precursor, generating 3' termini of tRNAs. A 3'-hydroxy group is left at the tRNA terminus and a 5'-phosphoryl group is left at the trailer molecule.. Its function is as follows. Zinc phosphodiesterase, which displays some tRNA 3'-processing endonuclease activity. Probably involved in tRNA maturation, by removing a 3'-trailer from precursor tRNA. The sequence is that of Ribonuclease Z from Treponema denticola (strain ATCC 35405 / DSM 14222 / CIP 103919 / JCM 8153 / KCTC 15104).